A 106-amino-acid chain; its full sequence is DLMQFETLIMKSGVWYYGSYGCYCGSGGQFRPQDASDRCCFVHDCCYGKNGDIVCGGDDPCKKQICECDRVAATCFRDNKVTYDNKYWFFPAKFPPQNCKEESEPC.

Positions 23, 25, and 27 each coordinate Ca(2+). Intrachain disulfides connect Cys-24–Cys-40, Cys-39–Cys-75, Cys-45–Cys-106, Cys-46–Cys-68, and Cys-55–Cys-66. His-43 is an active-site residue. Asp-44 contributes to the Ca(2+) binding site. The active site involves Asp-69.

The cofactor is Ca(2+). Expressed by the venom gland.

It localises to the secreted. The catalysed reaction is a 1,2-diacyl-sn-glycero-3-phosphocholine + H2O = a 1-acyl-sn-glycero-3-phosphocholine + a fatty acid + H(+). Its activity is regulated as follows. Partially inhibited by magnesium ions and completely inhibited by zinc ions These divalent cations may act as competitive antagonists of the cofactor. In terms of biological role, snake venom phospholipase A2 (PLA2) that induces inflammatory response, with local edema and release of cytokines IL-1 alpha, IL-6 and TNF-alpha. Does not exhibit myotoxic, anticoagulant and antibacterial effects. Release of pro-inflammatory cytokines may be due to mast cell degranulation, and edema may be induced by arachidonic acid that results from the PLA2 catalytic activity. PLA2 catalyzes the calcium-dependent hydrolysis of the 2-acyl groups in 3-sn-phosphoglycerides. This chain is Acidic phospholipase A2 PhTX-III, found in Bothrocophias hyoprora (Amazonian hognose viper).